A 709-amino-acid polypeptide reads, in one-letter code: Polyribonucleotide nucleotidyltransferase (709 aa).

2 residues coordinate Mg(2+): Asp489 and Asp495. The KH domain occupies Pro556–Ile615. An S1 motif domain is found at Gly625–Lys693.

Belongs to the polyribonucleotide nucleotidyltransferase family. It depends on Mg(2+) as a cofactor.

The protein resides in the cytoplasm. It carries out the reaction RNA(n+1) + phosphate = RNA(n) + a ribonucleoside 5'-diphosphate. Functionally, involved in mRNA degradation. Catalyzes the phosphorolysis of single-stranded polyribonucleotides processively in the 3'- to 5'-direction. This chain is Polyribonucleotide nucleotidyltransferase, found in Streptococcus agalactiae serotype V (strain ATCC BAA-611 / 2603 V/R).